Reading from the N-terminus, the 273-residue chain is Light-independent protochlorophyllide reductase iron-sulfur ATP-binding protein (273 aa).

Residues 12–17 (GIGKST) and Lys41 contribute to the ATP site. Mg(2+) is bound at residue Ser16. Positions 97 and 131 each coordinate [4Fe-4S] cluster. An ATP-binding site is contributed by 182-183 (NR).

Belongs to the NifH/BchL/ChlL family. Homodimer. Protochlorophyllide reductase is composed of three subunits; BchL, BchN and BchB. [4Fe-4S] cluster serves as cofactor.

The enzyme catalyses chlorophyllide a + oxidized 2[4Fe-4S]-[ferredoxin] + 2 ADP + 2 phosphate = protochlorophyllide a + reduced 2[4Fe-4S]-[ferredoxin] + 2 ATP + 2 H2O. It functions in the pathway porphyrin-containing compound metabolism; bacteriochlorophyll biosynthesis (light-independent). In terms of biological role, component of the dark-operative protochlorophyllide reductase (DPOR) that uses Mg-ATP and reduced ferredoxin to reduce ring D of protochlorophyllide (Pchlide) to form chlorophyllide a (Chlide). This reaction is light-independent. The L component serves as a unique electron donor to the NB-component of the complex, and binds Mg-ATP. In Roseiflexus castenholzii (strain DSM 13941 / HLO8), this protein is Light-independent protochlorophyllide reductase iron-sulfur ATP-binding protein.